Consider the following 1395-residue polypeptide: uncharacterized protein (1395 aa).

ATP is bound at residue 89-96; sequence AYKKWGKS. Disordered stretches follow at residues 146–166 and 205–391; these read EEKI…LSPP and SSSS…MENR. 2 stretches are compositionally biased toward low complexity: residues 155 to 166 and 205 to 222; these read GSPSPEAELSPP and SSSS…TSSP. A compositionally biased stretch (basic and acidic residues) spans 230–269; it reads EVTKERSSEVPTTVHEKTQSKSKNEKENKFSNGTIEEKPA. Positions 287-301 are enriched in low complexity; it reads SWSSGSSEAGSSSSG. The segment covering 313–328 has biased composition (basic residues); sequence VKVRHKAREIRNKKGR. Residues 337–346 show a composition bias toward basic and acidic residues; it reads KHGEKAERNI. Residues 349–358 show a composition bias toward low complexity; it reads GSSSSSSSGS. Positions 369–391 are enriched in basic and acidic residues; sequence PLKEIGRKDPGSTEGKDLYMENR. Ser-814 and Ser-1080 each carry phosphoserine. Positions 1110–1132 are disordered; that stretch reads PISASELSPGGGSESEFESEKDE. 2 positions are modified to phosphoserine: Ser-1194 and Ser-1338. A compositionally biased stretch (basic and acidic residues) spans 1346 to 1359; the sequence is TGERDSGAKSDGFR. The interval 1346–1395 is disordered; sequence TGERDSGAKSDGFRGKMCSSASSTSEETGSEGGGEWVGPSEEELFSRTHL.

This is an uncharacterized protein from Homo sapiens (Human).